A 172-amino-acid polypeptide reads, in one-letter code: MQNKRDSYNREDLLASSQGELFGEGYPQLPAPNMLMMDRITKMSETEGEFGKGLILAELDITPDLWFFDCHFPGDPVMPGCLGLDAMWQLVGFFLGWVGGKGKGRALGVGEVKFTGQILPTAKKVTYEINMKRVVNRKLVMGLADGRVLVDGKEIYVAKDLKVGLFQDTSAF.

Residue H71 is part of the active site.

This sequence belongs to the thioester dehydratase family. FabA subfamily. In terms of assembly, homodimer.

The protein resides in the cytoplasm. It carries out the reaction a (3R)-hydroxyacyl-[ACP] = a (2E)-enoyl-[ACP] + H2O. The catalysed reaction is (3R)-hydroxydecanoyl-[ACP] = (2E)-decenoyl-[ACP] + H2O. It catalyses the reaction (2E)-decenoyl-[ACP] = (3Z)-decenoyl-[ACP]. It participates in lipid metabolism; fatty acid biosynthesis. Its function is as follows. Necessary for the introduction of cis unsaturation into fatty acids. Catalyzes the dehydration of (3R)-3-hydroxydecanoyl-ACP to E-(2)-decenoyl-ACP and then its isomerization to Z-(3)-decenoyl-ACP. Can catalyze the dehydratase reaction for beta-hydroxyacyl-ACPs with saturated chain lengths up to 16:0, being most active on intermediate chain length. This chain is 3-hydroxydecanoyl-[acyl-carrier-protein] dehydratase, found in Vibrio cholerae serotype O1 (strain ATCC 39541 / Classical Ogawa 395 / O395).